A 1229-amino-acid chain; its full sequence is DNA-directed RNA polymerase subunit beta (1229 aa).

Residues 1175–1229 (ESIDEDEQPQGLGAFERGLEEVENGEEDDDKEKFYEDLMDASQEQDESADDDIDE) form a disordered region. Composition is skewed to acidic residues over residues 1195 to 1204 (EVENGEEDDD) and 1211 to 1229 (DLMDASQEQDESADDDIDE).

Belongs to the RNA polymerase beta chain family. As to quaternary structure, the RNAP catalytic core consists of 2 alpha, 1 beta, 1 beta' and 1 omega subunit. When a sigma factor is associated with the core the holoenzyme is formed, which can initiate transcription.

It carries out the reaction RNA(n) + a ribonucleoside 5'-triphosphate = RNA(n+1) + diphosphate. Functionally, DNA-dependent RNA polymerase catalyzes the transcription of DNA into RNA using the four ribonucleoside triphosphates as substrates. This Caldicellulosiruptor saccharolyticus (strain ATCC 43494 / DSM 8903 / Tp8T 6331) protein is DNA-directed RNA polymerase subunit beta.